A 229-amino-acid chain; its full sequence is Peptidase E (229 aa).

Residues S120, D135, and H157 each act as charge relay system in the active site.

Belongs to the peptidase S51 family.

Its subcellular location is the cytoplasm. The catalysed reaction is Dipeptidase E catalyzes the hydrolysis of dipeptides Asp-|-Xaa. It does not act on peptides with N-terminal Glu, Asn or Gln, nor does it cleave isoaspartyl peptides.. Hydrolyzes dipeptides containing N-terminal aspartate residues. May play a role in allowing the cell to use peptide aspartate to spare carbon otherwise required for the synthesis of the aspartate family of amino acids. This is Peptidase E from Escherichia coli O6:K15:H31 (strain 536 / UPEC).